We begin with the raw amino-acid sequence, 28 residues long: Phospholipase A2 (28 aa).

Gly-28 contributes to the Ca(2+) binding site.

Ca(2+) is required as a cofactor. Expressed by the venom gland.

It localises to the secreted. The catalysed reaction is a 1,2-diacyl-sn-glycero-3-phosphocholine + H2O = a 1-acyl-sn-glycero-3-phosphocholine + a fatty acid + H(+). PLA2 catalyzes the calcium-dependent hydrolysis of the 2-acyl groups in 3-sn-phosphoglycerides. This is Phospholipase A2 from Scolopendra dehaani (Thai centipede).